Consider the following 217-residue polypeptide: Small ribosomal subunit protein uS3 (217 aa).

The KH type-2 domain occupies 38 to 106 (IRKFVQKELA…QVHINIIEIK (69 aa)).

The protein belongs to the universal ribosomal protein uS3 family. Part of the 30S ribosomal subunit. Forms a tight complex with proteins S10 and S14.

Functionally, binds the lower part of the 30S subunit head. Binds mRNA in the 70S ribosome, positioning it for translation. The chain is Small ribosomal subunit protein uS3 from Streptococcus sanguinis (strain SK36).